The following is a 351-amino-acid chain: Anthranilate phosphoribosyltransferase (351 aa).

5-phospho-alpha-D-ribose 1-diphosphate-binding positions include Gly-80, 83–84, Thr-88, 90–93, 108–116, and Ser-120; these read GD, NIST, and KHGNRSVTS. Position 80 (Gly-80) interacts with anthranilate. A Mg(2+)-binding site is contributed by Ser-92. Asn-111 contributes to the anthranilate binding site. Arg-166 lines the anthranilate pocket. Residues Asp-229 and Glu-230 each coordinate Mg(2+).

Belongs to the anthranilate phosphoribosyltransferase family. Homodimer. Mg(2+) is required as a cofactor.

The enzyme catalyses N-(5-phospho-beta-D-ribosyl)anthranilate + diphosphate = 5-phospho-alpha-D-ribose 1-diphosphate + anthranilate. Its pathway is amino-acid biosynthesis; L-tryptophan biosynthesis; L-tryptophan from chorismate: step 2/5. Functionally, catalyzes the transfer of the phosphoribosyl group of 5-phosphorylribose-1-pyrophosphate (PRPP) to anthranilate to yield N-(5'-phosphoribosyl)-anthranilate (PRA). The sequence is that of Anthranilate phosphoribosyltransferase from Chlorobium phaeovibrioides (strain DSM 265 / 1930) (Prosthecochloris vibrioformis (strain DSM 265)).